The primary structure comprises 741 residues: Probable basic-leucine zipper transcription factor I (741 aa).

Residues 77 to 117 (QIIEQIQFLQQQQQQQHDQIQQQLHNFQQQYQQQYQQRQQQ) adopt a coiled-coil conformation. Composition is skewed to low complexity over residues 153–164 (QQPPQSLQQQQQ), 172–237 (PQQQ…QIQK), 277–290 (IQQQQLPPQTIQQK), and 381–390 (QQQQQQQQQQ). Disordered stretches follow at residues 153–237 (QQPP…QIQK), 277–305 (IQQQQLPPQTIQQKEINKKNQSKQSSNSM), and 349–390 (KQKE…QQQQ). In terms of domain architecture, bZIP spans 429-492 (ESKKSIKRIN…HEGGTMAILK (64 aa)). Residues 431–432 (KK) form a basic motif region. The segment at 434 to 441 (IKRINQNI) is leucine-zipper.

The protein belongs to the bZIP family.

The protein resides in the nucleus. Functionally, probable transcriptional regulator. The polypeptide is Probable basic-leucine zipper transcription factor I (bzpI) (Dictyostelium discoideum (Social amoeba)).